Reading from the N-terminus, the 254-residue chain is NAD-dependent protein deacylase 2 (254 aa).

Positions 1–254 (MDEHSIMQAV…LPALVRRLGV (254 aa)) constitute a Deacetylase sirtuin-type domain. 24-44 (GAGMSADSGLETYRDPETGVW) contributes to the NAD(+) binding site. Substrate-binding residues include Y69 and R72. 105–108 (QNID) lines the NAD(+) pocket. The active-site Proton acceptor is H123. Zn(2+) is bound by residues C131, C134, C157, and C160. NAD(+)-binding positions include 197–199 (GTS) and A241.

This sequence belongs to the sirtuin family. Class III subfamily. The cofactor is Zn(2+).

Its subcellular location is the cytoplasm. It carries out the reaction N(6)-acetyl-L-lysyl-[protein] + NAD(+) + H2O = 2''-O-acetyl-ADP-D-ribose + nicotinamide + L-lysyl-[protein]. The catalysed reaction is N(6)-succinyl-L-lysyl-[protein] + NAD(+) + H2O = 2''-O-succinyl-ADP-D-ribose + nicotinamide + L-lysyl-[protein]. NAD-dependent lysine deacetylase and desuccinylase that specifically removes acetyl and succinyl groups on target proteins. Modulates the activities of several proteins which are inactive in their acylated form. In Corynebacterium efficiens (strain DSM 44549 / YS-314 / AJ 12310 / JCM 11189 / NBRC 100395), this protein is NAD-dependent protein deacylase 2.